We begin with the raw amino-acid sequence, 139 residues long: ATP synthase epsilon chain 2 (139 aa).

It belongs to the ATPase epsilon chain family. F-type ATPases have 2 components, CF(1) - the catalytic core - and CF(0) - the membrane proton channel. CF(1) has five subunits: alpha(3), beta(3), gamma(1), delta(1), epsilon(1). CF(0) has three main subunits: a, b and c.

The protein localises to the cell inner membrane. Functionally, produces ATP from ADP in the presence of a proton gradient across the membrane. The chain is ATP synthase epsilon chain 2 (atpC2) from Ralstonia nicotianae (strain ATCC BAA-1114 / GMI1000) (Ralstonia solanacearum).